The chain runs to 276 residues: Caspase-6 (276 aa).

A propeptide spanning residues 1–5 (MTETD) is cleaved from the precursor. Positions 25-27 (KRR) are tri-arginine exosite. Serine 62 carries the post-translational modification Phosphoserine. Histidine 104 is a catalytic residue. The segment at 108–125 (NHVYAYDAKIEIQTLTGL) is 130's region. Residue cysteine 146 is part of the active site. Residues 163-175 (HQTDKLDNVTQVD) constitute a propeptide that is removed on maturation. Serine 239 carries the phosphoserine modification. 2 S-palmitoyl cysteine lipidation sites follow: cysteine 246 and cysteine 259.

It belongs to the peptidase C14A family. As to quaternary structure, heterotetramer that consists of two anti-parallel arranged heterodimers, each one formed by a 18 kDa (p18) and a 11 kDa (p11) subunit. Interacts with BIRC6/bruce. Interacts with RIPK3. In terms of assembly, heterotetramer that consists of two anti-parallel arranged heterodimers, each one formed by a 18 kDa (Caspase-6 subunit p18) and a 11 kDa (Caspase-6 subunit p11) subunit. Post-translationally, phosphorylated by NUAK1; phosphorylation inhibits self-activation. Phosphorylation at Ser-239 by AMP-activated protein kinase (PRKAA1 or PRKAA2) inhibits autocleavage, preventing caspase activation, thereby preventing hepatocyte apoptosis. In terms of processing, palmitoylation by ZDHHC17 blocks dimerization and subsequent activation, leading to inhibit the cysteine protease activity. Can be cleaved and activated by different caspases, depending on the context. Cleaved and activated by caspase-8 (CASP8) and subsequently by caspase-3 (CASP3). Can also undergo autoactivation by mediating autocleavage at Asp-162 and Asp-175, while it is not able to cleave its N-terminal disordered prodomain. Cleaved and activated by CASP1, possibly in the context of inflammation. As to expression, highly expressed in lung, liver, kidney, testis, and heart. Lower levels in spleen, skeletal muscle and brain. Expressed in neurons.

Its subcellular location is the cytoplasm. It localises to the nucleus. The enzyme catalyses Strict requirement for Asp at position P1 and has a preferred cleavage sequence of Val-Glu-His-Asp-|-.. During activation, the N-terminal disordered prodomain is removed by cleavage. Concomitantly, double cleavage gives rise to a large 18-kDa and a small 11-kDa subunit. The two large and two small subunits then assemble to form the active CASP6 complex. Can be cleaved and activated by different caspases, depending on the context. Cleaved and activated by caspase-8 (CASP8) and subsequently by caspase-3 (CASP3). Can also undergo autoactivation by mediating autocleavage at Asp-162 and Asp-175, while it is not able to cleave its N-terminal disordered prodomain. Intramolecular cleavage at Asp-175 is a prerequisite for CASP6 self-activation. Cleaved and activated by CASP1 in neurons, possibly in the context of inflammation. Phosphorylation at Ser-239 inhibits autocleavage, preventing caspase activation. In terms of biological role, cysteine protease that plays essential roles in programmed cell death, axonal degeneration, development and innate immunity. Acts as a non-canonical executioner caspase during apoptosis: localizes in the nucleus and cleaves the nuclear structural protein NUMA1 and lamin A/LMNA thereby inducing nuclear shrinkage and fragmentation. Lamin-A/LMNA cleavage is required for chromatin condensation and nuclear disassembly during apoptotic execution. Acts as a regulator of liver damage by promoting hepatocyte apoptosis: in absence of phosphorylation by AMP-activated protein kinase (AMPK), catalyzes cleavage of BID, leading to cytochrome c release, thereby participating in nonalcoholic steatohepatitis. Cleaves PARK7/DJ-1 in cells undergoing apoptosis. Involved in intrinsic apoptosis by mediating cleavage of RIPK1. Furthermore, cleaves many transcription factors such as NF-kappa-B and cAMP response element-binding protein/CREBBP. Cleaves phospholipid scramblase proteins XKR4 and XKR9. In addition to apoptosis, involved in different forms of programmed cell death. Plays an essential role in defense against viruses by acting as a central mediator of the ZBP1-mediated pyroptosis, apoptosis, and necroptosis (PANoptosis), independently of its cysteine protease activity. PANoptosis is a unique inflammatory programmed cell death, which provides a molecular scaffold that allows the interactions and activation of machinery required for inflammasome/pyroptosis, apoptosis and necroptosis. Mechanistically, interacts with RIPK3 and enhances the interaction between RIPK3 and ZBP1, leading to ZBP1-mediated inflammasome activation and cell death. Plays an essential role in axon degeneration during axon pruning which is the remodeling of axons during neurogenesis but not apoptosis. Regulates B-cell programs both during early development and after antigen stimulation. Functionally, (Microbial infection) Proteolytically cleaves the N protein of coronaviruses. The cleavage leads to two fragments and modulates coronavirus replication by regulating IFN signaling. The two fragments produced by the cleavage interact with IRF3 inhibiting its nuclear translocation after activation and reduce the expression of IFNB and IFN-stimulated genes. This is Caspase-6 from Mus musculus (Mouse).